Consider the following 141-residue polypeptide: 3-hydroxyacyl-[acyl-carrier-protein] dehydratase FabZ (141 aa).

His-48 is a catalytic residue.

Belongs to the thioester dehydratase family. FabZ subfamily.

It localises to the cytoplasm. It catalyses the reaction a (3R)-hydroxyacyl-[ACP] = a (2E)-enoyl-[ACP] + H2O. Involved in unsaturated fatty acids biosynthesis. Catalyzes the dehydration of short chain beta-hydroxyacyl-ACPs and long chain saturated and unsaturated beta-hydroxyacyl-ACPs. The chain is 3-hydroxyacyl-[acyl-carrier-protein] dehydratase FabZ from Herpetosiphon aurantiacus (strain ATCC 23779 / DSM 785 / 114-95).